The following is a 369-amino-acid chain: Cobalt-precorrin-5B C(1)-methyltransferase (369 aa).

This sequence belongs to the CbiD family.

The catalysed reaction is Co-precorrin-5B + S-adenosyl-L-methionine = Co-precorrin-6A + S-adenosyl-L-homocysteine. Its pathway is cofactor biosynthesis; adenosylcobalamin biosynthesis; cob(II)yrinate a,c-diamide from sirohydrochlorin (anaerobic route): step 6/10. In terms of biological role, catalyzes the methylation of C-1 in cobalt-precorrin-5B to form cobalt-precorrin-6A. The chain is Cobalt-precorrin-5B C(1)-methyltransferase from Geobacter metallireducens (strain ATCC 53774 / DSM 7210 / GS-15).